The primary structure comprises 1099 residues: ATP-dependent helicase/deoxyribonuclease subunit B (1099 aa).

Residues C766, C1056, C1059, and C1065 each coordinate [4Fe-4S] cluster.

Belongs to the helicase family. AddB/RexB type 2 subfamily. In terms of assembly, heterodimer of AddA and RexB. Mg(2+) serves as cofactor. The cofactor is [4Fe-4S] cluster.

Functionally, the heterodimer acts as both an ATP-dependent DNA helicase and an ATP-dependent, dual-direction single-stranded exonuclease. Recognizes the chi site generating a DNA molecule suitable for the initiation of homologous recombination. This subunit has 5' -&gt; 3' nuclease activity but not helicase activity. The sequence is that of ATP-dependent helicase/deoxyribonuclease subunit B from Lactococcus lactis subsp. cremoris (strain SK11).